A 396-amino-acid polypeptide reads, in one-letter code: MSEYSLFTSESVSEGHPDKIADQISDAVLDAIIAQDKYARVACETLVKTGVAIIAGEVTTSAWVDLEELVRKVIIDIGYNSSDVGFDGATCAVMNIIGKQSVDIAQGVDRSKPEDQGAGDQGLMFGYASNETDVLMPAPICFSHRLVERQAEARKSGLLPWLRPDAKSQVTCRYENGRVVGIDAVVLSTQHNPEVSQKDLQEAVMELIVKHTLPAELLHKGTQYHINPTGNFIIGGPVGDCGLTGRKIIVDSYGGMARHGGGAFSGKDPSKVDRSAAYAGRYVAKNIVAAGLAERCEIQVSYAIGVAQPTSISINTFGTGKVSDDKIVQLVRECFDLRPYAITKMLDLLHPMYQETAAYGHFGRTPQQKTVGDDTFTTFTWERTDRAQALRDAAGL.

ATP is bound at residue histidine 16. Residue aspartate 18 participates in Mg(2+) binding. Glutamate 44 is a K(+) binding site. The L-methionine site is built by glutamate 57 and glutamine 100. Residues 100-110 (QSVDIAQGVDR) form a flexible loop region. ATP-binding positions include 165–167 (DAK), aspartate 240, 246–247 (RK), alanine 263, and lysine 267. Aspartate 240 contributes to the L-methionine binding site. Lysine 271 provides a ligand contact to L-methionine.

Belongs to the AdoMet synthase family. Homotetramer; dimer of dimers. Mg(2+) serves as cofactor. It depends on K(+) as a cofactor.

It localises to the cytoplasm. It catalyses the reaction L-methionine + ATP + H2O = S-adenosyl-L-methionine + phosphate + diphosphate. The protein operates within amino-acid biosynthesis; S-adenosyl-L-methionine biosynthesis; S-adenosyl-L-methionine from L-methionine: step 1/1. In terms of biological role, catalyzes the formation of S-adenosylmethionine (AdoMet) from methionine and ATP. The overall synthetic reaction is composed of two sequential steps, AdoMet formation and the subsequent tripolyphosphate hydrolysis which occurs prior to release of AdoMet from the enzyme. The protein is S-adenosylmethionine synthase of Pseudomonas entomophila (strain L48).